A 308-amino-acid polypeptide reads, in one-letter code: Elongation factor Ts (308 aa).

An involved in Mg(2+) ion dislocation from EF-Tu region spans residues 80 to 83 (TDFV).

The protein belongs to the EF-Ts family.

The protein resides in the cytoplasm. Its function is as follows. Associates with the EF-Tu.GDP complex and induces the exchange of GDP to GTP. It remains bound to the aminoacyl-tRNA.EF-Tu.GTP complex up to the GTP hydrolysis stage on the ribosome. The polypeptide is Elongation factor Ts (Methylobacterium radiotolerans (strain ATCC 27329 / DSM 1819 / JCM 2831 / NBRC 15690 / NCIMB 10815 / 0-1)).